Here is a 440-residue protein sequence, read N- to C-terminus: 3-phosphoshikimate 1-carboxyvinyltransferase (440 aa).

Residues K19, S20, and R24 each contribute to the 3-phosphoshikimate site. Position 19 (K19) interacts with phosphoenolpyruvate. Phosphoenolpyruvate-binding residues include G92 and R121. 3-phosphoshikimate-binding residues include S166, Q168, D315, and K342. Q168 is a binding site for phosphoenolpyruvate. D315 acts as the Proton acceptor in catalysis. Positions 346 and 399 each coordinate phosphoenolpyruvate.

Belongs to the EPSP synthase family. As to quaternary structure, monomer.

The protein resides in the cytoplasm. The catalysed reaction is 3-phosphoshikimate + phosphoenolpyruvate = 5-O-(1-carboxyvinyl)-3-phosphoshikimate + phosphate. It functions in the pathway metabolic intermediate biosynthesis; chorismate biosynthesis; chorismate from D-erythrose 4-phosphate and phosphoenolpyruvate: step 6/7. Functionally, catalyzes the transfer of the enolpyruvyl moiety of phosphoenolpyruvate (PEP) to the 5-hydroxyl of shikimate-3-phosphate (S3P) to produce enolpyruvyl shikimate-3-phosphate and inorganic phosphate. This Leptospira borgpetersenii serovar Hardjo-bovis (strain JB197) protein is 3-phosphoshikimate 1-carboxyvinyltransferase.